The primary structure comprises 321 residues: Fe-S cluster assembly protein DRE2 (321 aa).

The interval 1-161 (MPAPVPPTAF…STPVTLSGAR (161 aa)) is N-terminal SAM-like domain. Positions 123 to 168 (PSPSTLAYTSPSAPSLPTVASDPSPAPSSSTPVTLSGARPLQLRRN) are disordered. Residues 139–156 (PTVASDPSPAPSSSTPVT) show a composition bias toward low complexity. The interval 162–197 (PLQLRRNGDKARKAALWAIDSPLIPDGGKSLLTPAD) is linker. [2Fe-2S] cluster-binding residues include cysteine 203, cysteine 219, cysteine 222, and cysteine 224. The segment at 203–224 (CVFPAENGKPVKRRRACKDCTC) is fe-S binding site A. [4Fe-4S] cluster is bound by residues cysteine 285, cysteine 288, cysteine 296, and cysteine 299. Short sequence motifs (cx2C motif) lie at residues 285–288 (CGSC) and 296–299 (CSSC). The interval 285 to 299 (CGSCYLGDAFRCSSC) is fe-S binding site B.

It belongs to the anamorsin family. As to quaternary structure, monomer. Interacts with TAH18. Interacts with MIA40. [2Fe-2S] cluster is required as a cofactor. It depends on [4Fe-4S] cluster as a cofactor.

The protein localises to the cytoplasm. Its subcellular location is the mitochondrion intermembrane space. Its function is as follows. Component of the cytosolic iron-sulfur (Fe-S) protein assembly (CIA) machinery required for the maturation of extramitochondrial Fe-S proteins. Part of an electron transfer chain functioning in an early step of cytosolic Fe-S biogenesis, facilitating the de novo assembly of a [4Fe-4S] cluster on the scaffold complex CFD1-NBP35. Electrons are transferred to DRE2 from NADPH via the FAD- and FMN-containing protein TAH18. TAH18-DRE2 are also required for the assembly of the diferric tyrosyl radical cofactor of ribonucleotide reductase (RNR), probably by providing electrons for reduction during radical cofactor maturation in the catalytic small subunit RNR2. The protein is Fe-S cluster assembly protein DRE2 of Cryptococcus neoformans var. neoformans serotype D (strain B-3501A) (Filobasidiella neoformans).